The sequence spans 173 residues: U1 small nuclear ribonucleoprotein C (173 aa).

The Matrin-type zinc-finger motif lies at 4 to 36 (YYCDYCDTYLTHDSPSVRKTHCQGRKHKDNVKF). The disordered stretch occupies residues 72-100 (AAIPPPANMQGPPRPVPPGPMGPGPNMLG). Residues 73–94 (AIPPPANMQGPPRPVPPGPMGP) are compositionally biased toward pro residues.

Belongs to the U1 small nuclear ribonucleoprotein C family. As to quaternary structure, U1 snRNP is composed of the 7 core Sm proteins B/B', D1, D2, D3, E, F and G that assemble in a heptameric protein ring on the Sm site of the small nuclear RNA to form the core snRNP, and at least 3 U1 snRNP-specific proteins U1-70K, U1-A and U1-C. U1-C interacts with U1 snRNA and the 5' splice-site region of the pre-mRNA.

The protein resides in the nucleus. In terms of biological role, component of the spliceosomal U1 snRNP, which is essential for recognition of the pre-mRNA 5' splice-site and the subsequent assembly of the spliceosome. U1-C is directly involved in initial 5' splice-site recognition for both constitutive and regulated alternative splicing. The interaction with the 5' splice-site seems to precede base-pairing between the pre-mRNA and the U1 snRNA. Stimulates commitment or early (E) complex formation by stabilizing the base pairing of the 5' end of the U1 snRNA and the 5' splice-site region. The chain is U1 small nuclear ribonucleoprotein C from Pediculus humanus subsp. corporis (Body louse).